A 1044-amino-acid polypeptide reads, in one-letter code: Integrin alpha-V (1044 aa).

Residues 1–30 (MAAPGRLLLRPRPGGLLLLLPGLLLPLADA) form the signal peptide. Residues 31–988 (FNLDVESPAE…WGIQPAPMPV (958 aa)) are Extracellular-facing. FG-GAP repeat units follow at residues 32–98 (NLDV…RRCQ), 109–170 (DYAK…VEYA), 173–225 (RSKN…ISKY), 237–291 (QLAT…GKNM), 292–357 (SSLH…GDFQ), 358–415 (TTKL…GLNS), and 419–482 (QILE…VYPS). An N-linked (GlcNAc...) asparagine glycan is attached at N74. Cystine bridges form between C89/C97, C138/C158, and C172/C185. Ca(2+) contacts are provided by D260, N262, D264, I266, and D268. Residues N290 and N296 are each glycosylated (N-linked (GlcNAc...) asparagine). Ca(2+) is bound by residues D314, N316, D318, Y320, D322, D379, D381, D383, F385, D387, D443, D445, N447, Y449, and D451. 2 disulfide bridges follow: C491–C502 and C508–C565. Residue N615 is glycosylated (N-linked (GlcNAc...) asparagine). 2 disulfides stabilise this stretch: C626/C632 and C698/C711. N704, N835, N851, and N869 each carry an N-linked (GlcNAc...) asparagine glycan. 2 disulfide bridges follow: C852–C910 and C900–C905. N941, N969, and N976 each carry an N-linked (GlcNAc...) asparagine glycan. A helical transmembrane segment spans residues 989-1012 (PVWVIILAVLAGLLLLAVLVFVMY). Residues 1013 to 1044 (RMGFFKRVRPPQEEQEREQLQPHENGEGNSET) lie on the Cytoplasmic side of the membrane. The short motif at 1015-1019 (GFFKR) is the GFFKR motif element. A compositionally biased stretch (basic and acidic residues) spans 1023–1038 (PQEEQEREQLQPHENG). A disordered region spans residues 1023 to 1044 (PQEEQEREQLQPHENGEGNSET).

This sequence belongs to the integrin alpha chain family. Heterodimer of an alpha and a beta subunit. The alpha subunit is composed of a heavy and a light chain linked by a disulfide bond. Alpha-V (ITGAV) associates with either beta-1 (ITGB1), beta-3 (ITGB3), beta-5 (ITGB5), beta-6 (ITGB6) or beta-8 (ITGB8). Interacts with RAB25. Interacts with CIB1. Integrins ITGAV:ITGB3 and ITGAV:ITGB5 interact with FBLN5 (via N-terminus). ITGAV:ITGB3 and ITGAV:ITGB5 interact with CCN3. ITGAV:ITGB3 interacts with ADGRA2. ITGAV:ITGB3 interacts with FGF2; it is likely that FGF2 can simultaneously bind ITGAV:ITGB3 and FGF receptors. ITGAV:ITGB3 interacts with SELP (via C-type lectin domain); the interaction mediates cell-cell interaction and adhesion. ITGAV:ITGB3 is found in a ternary complex with CX3CR1 and CX3CL1. ITGAV:ITGB3 is found in a ternary complex with NRG1 and ERBB3. ITGAV:ITGB3 is found in a ternary complex with FGF1 and FGFR1. ITGAV:ITGB3 is found in a ternary complex with IGF1 and IGF1R. ITGAV:ITGB3 interacts with IGF2. ITGAV:ITGB3 and ITGAV:ITGB6 interact with FBN1. ITGAV:ITGB3 interacts with CD9, CD81 and CD151 (via second extracellular domain). ITGAV:ITGB6 interacts with TGFB1. ITGAV:ITGB3 interacts with PTN. Forms a complex with PTPRZ1 and PTN that stimulates endothelial cell migration through ITGB3 'Tyr-773' phosphorylation. Interacts with TM4SF19.

The protein resides in the cell membrane. Its subcellular location is the cell junction. It localises to the focal adhesion. In terms of biological role, the alpha-V (ITGAV) integrins are receptors for vitronectin, cytotactin, fibronectin, fibrinogen, laminin, matrix metalloproteinase-2, osteopontin, osteomodulin, prothrombin, thrombospondin, TGFB1 and vWF. They recognize the sequence R-G-D in a wide array of ligands. Alpha-V integrins may play a role in embryo implantation, angiogenesis and wound healing. ITGAV:ITGB3 binds to fractalkine (CX3CL1) and may act as its coreceptor in CX3CR1-dependent fractalkine signaling. ITGAV:ITGB3 binds to NRG1 (via EGF domain) and this binding is essential for NRG1-ERBB signaling. ITGAV:ITGB3 binds to FGF1 and this binding is essential for FGF1 signaling. ITGAV:ITGB3 binds to FGF2 and this binding is essential for FGF2 signaling. ITGAV:ITGB3 binds to IGF1 and this binding is essential for IGF1 signaling. ITGAV:ITGB3 binds to IGF2 and this binding is essential for IGF2 signaling. ITGAV:ITGB3 binds to IL1B and this binding is essential for IL1B signaling. ITGAV:ITGB3 binds to PLA2G2A via a site (site 2) which is distinct from the classical ligand-binding site (site 1) and this induces integrin conformational changes and enhanced ligand binding to site 1. ITGAV:ITGB3 and ITGAV:ITGB6 act as a receptor for fibrillin-1 (FBN1) and mediate R-G-D-dependent cell adhesion to FBN1. Integrin alpha-V/beta-6 or alpha-V/beta-8 (ITGAV:ITGB6 or ITGAV:ITGB8) mediates R-G-D-dependent release of transforming growth factor beta-1 (TGF-beta-1) from regulatory Latency-associated peptide (LAP), thereby playing a key role in TGF-beta-1 activation. ITGAV:ITGB3 acts as a receptor for CD40LG. ITGAV:ITGB3 binds to the Lilrb4a/Gp49b receptor and enhances the Lilrb4a-mediated inhibition of mast cell activation. ITGAV:ITGB3 also suppresses marginal zone B cell antibody production through its interaction with Lilrb4a. ITGAV:ITGB3 acts as a receptor for IBSP and promotes cell adhesion and migration to IBSP. The polypeptide is Integrin alpha-V (Itgav) (Mus musculus (Mouse)).